A 66-amino-acid polypeptide reads, in one-letter code: Large ribosomal subunit protein bL33c (66 aa).

This sequence belongs to the bacterial ribosomal protein bL33 family.

Its subcellular location is the plastid. The protein localises to the chloroplast. The sequence is that of Large ribosomal subunit protein bL33c from Lobularia maritima (Sweet alyssum).